Here is a 361-residue protein sequence, read N- to C-terminus: Ataxin-3 (361 aa).

Residue M1 forms a Peptide (Met-Gly) (interchain with G-Cter in ubiquitin) linkage. In terms of domain architecture, Josephin spans 1–180 (MESIFHEKQE…DCEADQLLQM (180 aa)). C14 (nucleophile) is an active-site residue. H119 (proton acceptor) is an active-site residue. N134 is a catalytic residue. Residue K200 forms a Glycyl lysine isopeptide (Lys-Gly) (interchain with G-Cter in ubiquitin) linkage. S219 bears the Phosphoserine mark. UIM domains lie at 224 to 243 (EDEE…IDME) and 244 to 263 (DEEA…SSRN). Residues 258-278 (QGSSRNISQDMTQTSGTNLTS) are compositionally biased toward polar residues. A disordered region spans residues 258–338 (QGSSRNISQD…DLGDAMSEED (81 aa)). 2 positions are modified to phosphoserine: S265 and S272. The segment covering 279–293 (EELRKRREAYFEKQQ) has biased composition (basic and acidic residues). Over residues 294-305 (QKQQQQQQQQQQ) the composition is skewed to low complexity. A compositionally biased stretch (polar residues) spans 306–325 (GDLSGQSSHPCERPATSSGA). Phosphoserine is present on S328. The UIM 3 domain maps to 331–349 (GDAMSEEDMLQAAVTMSLE).

Interacts with STUB1/CHIP (when monoubiquitinated). Interacts with DNA repair proteins RAD23A and RAD23B. Interacts with BECN1 (via its poly-Gln domain). Interacts with PRKN, UBR2, VCP and tubulin. Short isoform 1 interacts with CASP7. Monoubiquitinated N-terminally by UBE2W, possibly leading to activate the deubiquitinating enzyme activity. Ubiquitous.

Its subcellular location is the nucleus matrix. It localises to the nucleus. It is found in the lysosome membrane. It carries out the reaction Thiol-dependent hydrolysis of ester, thioester, amide, peptide and isopeptide bonds formed by the C-terminal Gly of ubiquitin (a 76-residue protein attached to proteins as an intracellular targeting signal).. In terms of biological role, deubiquitinating enzyme involved in protein homeostasis maintenance, transcription, cytoskeleton regulation, myogenesis and degradation of misfolded chaperone substrates. Binds long polyubiquitin chains and trims them, while it has weak or no activity against chains of 4 or less ubiquitins. Involved in degradation of misfolded chaperone substrates via its interaction with STUB1/CHIP: recruited to monoubiquitinated STUB1/CHIP, and restricts the length of ubiquitin chain attached to STUB1/CHIP substrates and preventing further chain extension. Interacts with key regulators of transcription and represses transcription: acts as a histone-binding protein that regulates transcription. Acts as a negative regulator of mTORC1 signaling in response to amino acid deprivation by mediating deubiquitination of RHEB, thereby promoting RHEB inactivation by the TSC-TBC complex. Regulates autophagy via the deubiquitination of 'Lys-402' of BECN1 leading to the stabilization of BECN1. The sequence is that of Ataxin-3 from Homo sapiens (Human).